Here is a 2094-residue protein sequence, read N- to C-terminus: RNA1 polyprotein (2094 aa).

Residues 524-1053 lie on the Cytoplasmic side of the membrane; it reads CNANALDFPL…YDEMITHGGK (530 aa). In terms of domain architecture, SF3 helicase spans 672–838; that stretch reads LTKIRATCAR…VEFDPRNPSA (167 aa). 699–706 provides a ligand contact to ATP; that stretch reads GKSHCGKS. The helical transmembrane segment at 1054-1074 threads the bilayer; the sequence is VLAIFAALLLVLLLYSSFFAL. Residues 1075–1105 lie on the Lumenal side of the membrane; the sequence is YQTFVAGTSSALVSAGMITQLSANAGSVCTS. Residue asparagine 1129 is glycosylated (N-linked (GlcNAc...) asparagine; by host). The Peptidase C3 domain occupies 1136–1366; it reads ALNSNLEDKY…CLLPDYHEDL (231 aa). Catalysis depends on for picornain 3C-like protease activity residues histidine 1176, glutamate 1217, and cysteine 1323. The RdRp catalytic domain occupies 1655 to 1780; the sequence is SVAINCDYAS…AVHPDYLPHF (126 aa).

The protein belongs to the nepoviruses RNA1 polyprotein family. In terms of processing, specific enzymatic cleavages by picornain 3C-like protease in vivo yield mature proteins. Picornain 3C-like protease is autocatalytically processed. NTB exists as NTB-VPg polyprotein as well as NTB mature protein. Post-translationally, VPg is uridylylated by the polymerase and is covalently linked to the 5'-end of genomic RNA. This uridylylated form acts as a nucleotide-peptide primer for the polymerase.

The protein localises to the host endoplasmic reticulum lumen. It is found in the host endoplasmic reticulum membrane. The enzyme catalyses RNA(n) + a ribonucleoside 5'-triphosphate = RNA(n+1) + diphosphate. Its function is as follows. Picornain 3C-like protease is a thiol protease that cleaves at Gln-|-Gly or Gln-|-Ser sites in the P1 and P2 polyproteins. The VPg-NTB polyprotein may act as a membrane-anchor for the replication complex. The chain is RNA1 polyprotein from Blackcurrant reversion association virus (BRAV).